Here is a 503-residue protein sequence, read N- to C-terminus: Probable DNA ligase (503 aa).

D212 provides a ligand contact to ATP. The active-site N6-AMP-lysine intermediate is K214. ATP-binding residues include R219, R234, E263, F296, R368, and K374.

This sequence belongs to the ATP-dependent DNA ligase family. Mg(2+) serves as cofactor.

It catalyses the reaction ATP + (deoxyribonucleotide)n-3'-hydroxyl + 5'-phospho-(deoxyribonucleotide)m = (deoxyribonucleotide)n+m + AMP + diphosphate.. Its function is as follows. DNA ligase that seals nicks in double-stranded DNA during DNA replication, DNA recombination and DNA repair. The polypeptide is Probable DNA ligase (Kineococcus radiotolerans (strain ATCC BAA-149 / DSM 14245 / SRS30216)).